The chain runs to 154 residues: Large-conductance mechanosensitive channel (154 aa).

3 helical membrane passes run 14–34, 38–58, and 81–101; these read VMDL…VTSL, IITP…LFIN, and GLFL…FIVI.

The protein belongs to the MscL family. As to quaternary structure, homopentamer.

It localises to the cell membrane. In terms of biological role, channel that opens in response to stretch forces in the membrane lipid bilayer. May participate in the regulation of osmotic pressure changes within the cell. The chain is Large-conductance mechanosensitive channel from Brevibacillus brevis (strain 47 / JCM 6285 / NBRC 100599).